A 133-amino-acid chain; its full sequence is Large ribosomal subunit protein bL17 (133 aa).

The protein belongs to the bacterial ribosomal protein bL17 family. Part of the 50S ribosomal subunit. Contacts protein L32.

This Pseudoalteromonas translucida (strain TAC 125) protein is Large ribosomal subunit protein bL17.